Here is a 159-residue protein sequence, read N- to C-terminus: Transcriptional repressor NrdR (159 aa).

A zinc finger spans residues 3–34; it reads CPFCRHDDTQVVDSRVSEDGAAIRRRRRCSAC. Positions 49 to 139 constitute an ATP-cone domain; that stretch reads PFVVKKDGSR…VYRRFEDVSE (91 aa).

This sequence belongs to the NrdR family. Requires Zn(2+) as cofactor.

In terms of biological role, negatively regulates transcription of bacterial ribonucleotide reductase nrd genes and operons by binding to NrdR-boxes. The sequence is that of Transcriptional repressor NrdR from Burkholderia cenocepacia (strain ATCC BAA-245 / DSM 16553 / LMG 16656 / NCTC 13227 / J2315 / CF5610) (Burkholderia cepacia (strain J2315)).